The sequence spans 71 residues: Small ribosomal subunit protein bS21 (71 aa).

Positions 48–60 (KKAAAVKRYKKKL) are enriched in basic residues. The interval 48–71 (KKAAAVKRYKKKLQRESIRTTRMY) is disordered. Residues 61 to 71 (QRESIRTTRMY) show a composition bias toward basic and acidic residues.

This sequence belongs to the bacterial ribosomal protein bS21 family.

The chain is Small ribosomal subunit protein bS21 from Psychrobacter sp. (strain PRwf-1).